The chain runs to 635 residues: Threonine--tRNA ligase (635 aa).

The TGS domain maps to 1 to 61; the sequence is MVSIRLPDGS…DRDASLAIVT (61 aa). Residues 242–533 form a catalytic region; sequence DHRKLGKQLD…LIEHHAGAMP (292 aa). Residues cysteine 333, histidine 384, and histidine 510 each coordinate Zn(2+).

Belongs to the class-II aminoacyl-tRNA synthetase family. Homodimer. It depends on Zn(2+) as a cofactor.

The protein resides in the cytoplasm. The enzyme catalyses tRNA(Thr) + L-threonine + ATP = L-threonyl-tRNA(Thr) + AMP + diphosphate + H(+). Its function is as follows. Catalyzes the attachment of threonine to tRNA(Thr) in a two-step reaction: L-threonine is first activated by ATP to form Thr-AMP and then transferred to the acceptor end of tRNA(Thr). Also edits incorrectly charged L-seryl-tRNA(Thr). This chain is Threonine--tRNA ligase, found in Burkholderia vietnamiensis (strain G4 / LMG 22486) (Burkholderia cepacia (strain R1808)).